A 101-amino-acid polypeptide reads, in one-letter code: CRISPR-associated endoribonuclease Cas2 (101 aa).

Aspartate 17 serves as a coordination point for Mg(2+).

Belongs to the CRISPR-associated endoribonuclease Cas2 protein family. In terms of assembly, homodimer, forms a heterotetramer with a Cas1 homodimer. Mg(2+) is required as a cofactor.

Its function is as follows. CRISPR (clustered regularly interspaced short palindromic repeat), is an adaptive immune system that provides protection against mobile genetic elements (viruses, transposable elements and conjugative plasmids). CRISPR clusters contain sequences complementary to antecedent mobile elements and target invading nucleic acids. CRISPR clusters are transcribed and processed into CRISPR RNA (crRNA). Functions as a ssRNA-specific endoribonuclease. Involved in the integration of spacer DNA into the CRISPR cassette. In Methanopyrus kandleri (strain AV19 / DSM 6324 / JCM 9639 / NBRC 100938), this protein is CRISPR-associated endoribonuclease Cas2.